The primary structure comprises 892 residues: Alanine--tRNA ligase (892 aa).

Positions 565, 569, 675, and 679 each coordinate Zn(2+). A disordered region spans residues methionine 852–alanine 871.

Belongs to the class-II aminoacyl-tRNA synthetase family. It depends on Zn(2+) as a cofactor.

The protein localises to the cytoplasm. It carries out the reaction tRNA(Ala) + L-alanine + ATP = L-alanyl-tRNA(Ala) + AMP + diphosphate. Functionally, catalyzes the attachment of alanine to tRNA(Ala) in a two-step reaction: alanine is first activated by ATP to form Ala-AMP and then transferred to the acceptor end of tRNA(Ala). Also edits incorrectly charged Ser-tRNA(Ala) and Gly-tRNA(Ala) via its editing domain. This chain is Alanine--tRNA ligase, found in Parvibaculum lavamentivorans (strain DS-1 / DSM 13023 / NCIMB 13966).